A 278-amino-acid chain; its full sequence is Bis(5'-nucleosyl)-tetraphosphatase, symmetrical (278 aa).

It belongs to the Ap4A hydrolase family.

The catalysed reaction is P(1),P(4)-bis(5'-adenosyl) tetraphosphate + H2O = 2 ADP + 2 H(+). In terms of biological role, hydrolyzes diadenosine 5',5'''-P1,P4-tetraphosphate to yield ADP. The sequence is that of Bis(5'-nucleosyl)-tetraphosphatase, symmetrical from Buchnera aphidicola subsp. Baizongia pistaciae (strain Bp).